Here is a 1407-residue protein sequence, read N- to C-terminus: MISATSFVTAIGSRPPRYRTPSPPRRAVEPISPCSTADYRTYRASREISASATSDHVRSTPTDKRPSPADVPASHRSGHGRSSSTIDTLATIALATSPTFTPLTHRPPSDKSNTTLSMFPPETEPVERPAKRPRSERDESSYTQHRSNAFSIARPPAISDSMKTDAELLLNFARPTNLYPPIPSSKRANTDDSYHNHTFHTQAQIKERNASTYWVTNHENVIFNHSAMHNIPPSRMRSQSDGSAAISRPVIEGLRPNTSSSTLPPLAFQEEADSGDRHWDMERKPVLEESQVDFCKPDETVPILSQSQPLKKELDADSNGSSQASCATCNLVRIPVDNEDQDVTWISCDGCKRWFHIVCAGFKNDRETRTVDKFICKTCRPIHGQTTFVRKSSRVRTSIDYAGLNQGLVKSATDSLEHHYIEPIKQNKIRFLPENFPRMRPELVTAEYFEKGNGMTEPIVIPAEFNTHATIPPTNPEFDALVQDAPSQEMFDELLDHLPNVDHETVIDCGQNQLDMVIPQGLTVRTVSELYGPEERVEVIDVKSQHGEDKRWTMQKWADYYESTGDKVVRNVISLEVSQSKLGRLIRRPKIVRDLDLQDAVWPEELKAVGNFPKVQFYCLMSVADCYTDFHIDFGGSSVYYHILKGKKTFFFIPPKDKHLKKYEEWCNSPAQDYTFLGDQTKECYRVDLSEGDTMLIPSGWIHAVWTPENSLVIGGNFLTRLNYGMQIKIAKIEKETKVPMKFRYPFFQKIQWYAVLKYLEEDPVPQSVLAAFSQDENYRFHRKYPIYYEFGERANTEPKGSPYHNSRFYSQAELEGLPDLAKYLLRTALIAGSYLVEGVTADTRNAVKRSIPAMPGEPIDVIRTFGVWIAWKRGNEKAAHWTRPGVVESNAKLSLAEKRPAGRPSRRSERNADNQRTYAERQAVQRLSERPAVDIQKDSAPGDESVAPLANNSPPAATSGIPVPVMNEDTSQKHKTASRGSGLGPKRVACDACRKRRIRCHHKEENNGASGSQMTVSTSSLGHHTPTAQDAASALNSLAAIASGAGFQNGLHSIKGMDRMDASANFATSISATPHGVTLKVGDGSPDGLNSAKKGRSKACDDCRKSKRRCIHDEYGRIDPIKAQERSKPRATSLAKRPRVHEEAAPSSANKRLKQESTSPVAQPVHSSHMDTETPTRAQDSVENGVLDQYPRKSNTQHADGLPAEKALLPDQSSYASPPAFQADAVATKELPATVSKPAAVLVSPPTSLADEMDIHDQVDAGGEHVSVIYTPSSGSRQSSRQPRQVERYMPEVHFAKTAKSTTTTPQTTRRSSFGSSGRKTTPGLSSGSKKSGSRPSSSHGKKSLSPSVEKKAERHAISSAPFGQHGRGSKSEHGTSDVDPDAESLRLIREIQEQEFGLRRRAGRA.

Disordered regions lie at residues 1 to 86 (MISA…SSTI) and 98 to 151 (PTFT…NAFS). Composition is skewed to basic and acidic residues over residues 55 to 67 (DHVR…KRPS) and 125 to 140 (PVER…RDES). The span at 141-150 (SYTQHRSNAF) shows a compositional bias: polar residues. A PHD-type zinc finger spans residues 323–382 (QASCATCNLVRIPVDNEDQDVTWISCDGCKRWFHIVCAGFKNDRETRTVDKFICKTCRPI). The JmjC domain occupies 577–735 (VSQSKLGRLI…MQIKIAKIEK (159 aa)). Position 628 (threonine 628) interacts with substrate. Fe cation is bound by residues histidine 631 and aspartate 633. Residue lysine 648 coordinates substrate. Residue histidine 703 participates in Fe cation binding. Disordered regions lie at residues 893–987 (KLSL…LGPK), 1004–1027 (KEEN…HHTP), 1122–1183 (IKAQ…QDSV), and 1252–1389 (DEMD…SLRL). Composition is skewed to basic and acidic residues over residues 896–914 (LAEK…RNAD) and 928–938 (LSERPAVDIQK). Residues 1008–1027 (NGASGSQMTVSTSSLGHHTP) show a composition bias toward polar residues. The segment covering 1254–1264 (MDIHDQVDAGG) has biased composition (basic and acidic residues). A compositionally biased stretch (low complexity) spans 1273–1284 (PSSGSRQSSRQP). The span at 1285–1296 (RQVERYMPEVHF) shows a compositional bias: basic and acidic residues. Residues 1297 to 1349 (AKTAKSTTTTPQTTRRSSFGSSGRKTTPGLSSGSKKSGSRPSSSHGKKSLSPS) are compositionally biased toward low complexity.

This sequence belongs to the JHDM1 histone demethylase family. The cofactor is Fe(2+).

The protein resides in the nucleus. It carries out the reaction N(6),N(6)-dimethyl-L-lysyl(36)-[histone H3] + 2 2-oxoglutarate + 2 O2 = L-lysyl(36)-[histone H3] + 2 formaldehyde + 2 succinate + 2 CO2. Histone demethylase that specifically demethylates 'Lys-36' of histone H3, thereby playing a central role in histone code. In Emericella nidulans (strain FGSC A4 / ATCC 38163 / CBS 112.46 / NRRL 194 / M139) (Aspergillus nidulans), this protein is JmjC domain-containing histone demethylation protein 1 (jhd1).